The primary structure comprises 789 residues: Probable 3-hydroxyacyl-CoA dehydrogenase (789 aa).

It belongs to the 3-hydroxyacyl-CoA dehydrogenase family.

The enzyme catalyses a (3S)-3-hydroxyacyl-CoA + NAD(+) = a 3-oxoacyl-CoA + NADH + H(+). It participates in lipid metabolism; fatty acid beta-oxidation. Functionally, involved in the degradation of long-chain fatty acids. The chain is Probable 3-hydroxyacyl-CoA dehydrogenase (fadN) from Bacillus subtilis (strain 168).